The following is a 354-amino-acid chain: Ferrochelatase (354 aa).

2 residues coordinate Fe cation: histidine 214 and glutamate 295.

Belongs to the ferrochelatase family.

The protein resides in the cytoplasm. It catalyses the reaction heme b + 2 H(+) = protoporphyrin IX + Fe(2+). The protein operates within porphyrin-containing compound metabolism; protoheme biosynthesis; protoheme from protoporphyrin-IX: step 1/1. In terms of biological role, catalyzes the ferrous insertion into protoporphyrin IX. The chain is Ferrochelatase from Burkholderia ambifaria (strain ATCC BAA-244 / DSM 16087 / CCUG 44356 / LMG 19182 / AMMD) (Burkholderia cepacia (strain AMMD)).